We begin with the raw amino-acid sequence, 484 residues long: Ribosomal RNA small subunit methyltransferase F (484 aa).

S-adenosyl-L-methionine contacts are provided by residues 119–125 (ASAPGSK), Glu-143, Asp-170, and Asp-188. Cys-241 (nucleophile) is an active-site residue.

It belongs to the class I-like SAM-binding methyltransferase superfamily. RsmB/NOP family.

The protein localises to the cytoplasm. The catalysed reaction is cytidine(1407) in 16S rRNA + S-adenosyl-L-methionine = 5-methylcytidine(1407) in 16S rRNA + S-adenosyl-L-homocysteine + H(+). Functionally, specifically methylates the cytosine at position 1407 (m5C1407) of 16S rRNA. The protein is Ribosomal RNA small subunit methyltransferase F of Shewanella frigidimarina (strain NCIMB 400).